Reading from the N-terminus, the 326-residue chain is MEYTYLGRTGLRVSRLCLGTMNFGVDTDEKTAFRIMDEALDNGIQFFDTANIYGWGKNAGLTESIIGKWFAQGGQRREKVVLATKVYEPISDPNDGPNDMRGLSLYKIRRHLEGSLKRLQTDHIELYQMHHIDRRTPWDEIWEAFETQVRSGKVDYIGSSNFAGWHLVKAQAEAEKRRFMGLVTEQHKYSLLERTAEMEVLPAARDLGLGVVAWSPLAGGLLGGKALKSNAGTRTAKRADLIEKHRLQLEKFSDLCKELGEKEANVALAWVLANPVLTAPIIGPRTVEQLRDTIKAVEISLDKEILRMLNDIFPGPGGETPEAYAW.

Catalysis depends on Tyr-53, which acts as the Proton donor. 215-225 lines the NADP(+) pocket; sequence SPLAGGLLGGK. A coiled-coil region spans residues 242–305; the sequence is IEKHRLQLEK…AVEISLDKEI (64 aa).

This sequence belongs to the aldo/keto reductase family. Aldo/keto reductase 2 subfamily.

This is an uncharacterized protein from Bacillus subtilis (strain 168).